The chain runs to 443 residues: Enolase B (443 aa).

Positions 156 and 165 each coordinate substrate. The Proton donor role is filled by Glu208. 3 residues coordinate Mg(2+): Asp243, Glu296, and Asp323. 2 residues coordinate substrate: Glu296 and Asp323. Lys348 serves as the catalytic Proton acceptor. Substrate contacts are provided by residues 375–378 (SHRS) and Lys399.

Belongs to the enolase family. As to quaternary structure, homodimer. Requires Mg(2+) as cofactor.

It is found in the cytoplasm. The catalysed reaction is (2R)-2-phosphoglycerate = phosphoenolpyruvate + H2O. It participates in carbohydrate degradation; glycolysis; pyruvate from D-glyceraldehyde 3-phosphate: step 4/5. In Dictyostelium discoideum (Social amoeba), this protein is Enolase B (enoB).